A 474-amino-acid polypeptide reads, in one-letter code: UDP-glycosyltransferase 71C2 (474 aa).

Residues serine 293, 352 to 354 (APQ), 369 to 377 (HCGWNSILE), and 391 to 394 (YAEQ) contribute to the UDP-alpha-D-glucose site.

The protein belongs to the UDP-glycosyltransferase family.

Its function is as follows. Possesses low quercetin 3-O-glucosyltransferase, 7-O-glucosyltransferase and 3'-O-glucosyltransferase activities in vitro. Glucosylates other secondary metabolites in vitro like vanillin, trans-resveratrol, curumin and etoposide. This Arabidopsis thaliana (Mouse-ear cress) protein is UDP-glycosyltransferase 71C2 (UGT71C2).